The primary structure comprises 213 residues: Kynurenine formamidase (213 aa).

A substrate-binding site is contributed by tryptophan 18. Positions 48, 52, and 54 each coordinate Zn(2+). The Proton donor/acceptor role is filled by histidine 58. Histidine 160 and glutamate 172 together coordinate Zn(2+).

This sequence belongs to the Cyclase 1 superfamily. KynB family. As to quaternary structure, homodimer. It depends on Zn(2+) as a cofactor.

It carries out the reaction N-formyl-L-kynurenine + H2O = L-kynurenine + formate + H(+). The protein operates within amino-acid degradation; L-tryptophan degradation via kynurenine pathway; L-kynurenine from L-tryptophan: step 2/2. In terms of biological role, catalyzes the hydrolysis of N-formyl-L-kynurenine to L-kynurenine, the second step in the kynurenine pathway of tryptophan degradation. The chain is Kynurenine formamidase from Burkholderia vietnamiensis (strain G4 / LMG 22486) (Burkholderia cepacia (strain R1808)).